We begin with the raw amino-acid sequence, 177 residues long: Coatomer subunit zeta-1 (177 aa).

At methionine 1 the chain carries N-acetylmethionine.

It belongs to the adaptor complexes small subunit family. In terms of assembly, oligomeric complex that consists of at least the alpha, beta, beta', gamma, delta, epsilon and zeta subunits.

It localises to the cytoplasm. The protein resides in the golgi apparatus membrane. Its subcellular location is the cytoplasmic vesicle. The protein localises to the COPI-coated vesicle membrane. The coatomer is a cytosolic protein complex that binds to dilysine motifs and reversibly associates with Golgi non-clathrin-coated vesicles, which further mediate biosynthetic protein transport from the ER, via the Golgi up to the trans Golgi network. Coatomer complex is required for budding from Golgi membranes, and is essential for the retrograde Golgi-to-ER transport of dilysine-tagged proteins. The zeta subunit may be involved in regulating the coat assembly and, hence, the rate of biosynthetic protein transport due to its association-dissociation properties with the coatomer complex. The sequence is that of Coatomer subunit zeta-1 (COPZ1) from Bos taurus (Bovine).